The following is a 98-amino-acid chain: NADH-ubiquinone oxidoreductase chain 4L (98 aa).

3 consecutive transmembrane segments (helical) span residues 1–21 (MTLV…GLLM), 26–46 (LMSA…LATI), and 59–79 (MPII…ALLV).

The protein belongs to the complex I subunit 4L family. In terms of assembly, core subunit of respiratory chain NADH dehydrogenase (Complex I) which is composed of 45 different subunits.

Its subcellular location is the mitochondrion inner membrane. The enzyme catalyses a ubiquinone + NADH + 5 H(+)(in) = a ubiquinol + NAD(+) + 4 H(+)(out). Its function is as follows. Core subunit of the mitochondrial membrane respiratory chain NADH dehydrogenase (Complex I) which catalyzes electron transfer from NADH through the respiratory chain, using ubiquinone as an electron acceptor. Part of the enzyme membrane arm which is embedded in the lipid bilayer and involved in proton translocation. The polypeptide is NADH-ubiquinone oxidoreductase chain 4L (MT-ND4L) (Pontoporia blainvillei (Franciscana)).